A 741-amino-acid polypeptide reads, in one-letter code: Catalase-peroxidase 2 (741 aa).

Residues methionine 1–alanine 27 form the signal peptide. A cross-link (tryptophyl-tyrosyl-methioninium (Trp-Tyr) (with M-255)) is located at residues tryptophan 106–tyrosine 229. The active-site Proton acceptor is the histidine 107. Residues tyrosine 229–methionine 255 constitute a cross-link (tryptophyl-tyrosyl-methioninium (Tyr-Met) (with W-106)). Histidine 270 lines the heme b pocket.

It belongs to the peroxidase family. Peroxidase/catalase subfamily. In terms of assembly, homodimer or homotetramer. Heme b serves as cofactor. Post-translationally, formation of the three residue Trp-Tyr-Met cross-link is important for the catalase, but not the peroxidase activity of the enzyme.

The enzyme catalyses H2O2 + AH2 = A + 2 H2O. It catalyses the reaction 2 H2O2 = O2 + 2 H2O. Bifunctional enzyme with both catalase and broad-spectrum peroxidase activity. In Shewanella oneidensis (strain ATCC 700550 / JCM 31522 / CIP 106686 / LMG 19005 / NCIMB 14063 / MR-1), this protein is Catalase-peroxidase 2.